Consider the following 379-residue polypeptide: NuA4 complex subunit EAF3 homolog (379 aa).

Positions 6-61 constitute a Tudor-knot domain; that stretch reads EENEKVLVHHQNRIYEAKIIKVDPKTSKSDKKKPLYFIHYLGWKEKWNEWIEPNKI. The disordered stretch occupies residues 75-212; the sequence is TNIKASTTSL…KRNDSKSSHF (138 aa). A compositionally biased stretch (low complexity) spans 78-87; it reads KASTTSLNNK. Residues 111-141 show a composition bias toward acidic residues; that stretch reads ENSDEDENESELEDGGGEDADEGGEDIEDQE. Residues 165–199 show a composition bias toward low complexity; that stretch reads SSSSSSSSKSNNNNNNNNNNNNNNNNNNNNNNNNN. The 164-residue stretch at 214 to 377 folds into the MRG domain; sequence STKFIDIEIP…ASSPYLKAAS (164 aa).

As to quaternary structure, component of the NuA4 histone acetyltransferase complex.

Its subcellular location is the nucleus. Functionally, component of the NuA4 histone acetyltransferase complex which is involved in transcriptional activation of selected genes principally by acetylation of nucleosomal histone H4 and H2A. The NuA4 complex is also involved in DNA repair. Also a component of a complex which acts to repress transcription by deacetylation of nucleosomal histones. In Dictyostelium discoideum (Social amoeba), this protein is NuA4 complex subunit EAF3 homolog.